Consider the following 295-residue polypeptide: Bifunctional protein FolD (295 aa).

NADP(+)-binding positions include 165–167 (GRS), serine 190, and isoleucine 231.

Belongs to the tetrahydrofolate dehydrogenase/cyclohydrolase family. In terms of assembly, homodimer.

It catalyses the reaction (6R)-5,10-methylene-5,6,7,8-tetrahydrofolate + NADP(+) = (6R)-5,10-methenyltetrahydrofolate + NADPH. The enzyme catalyses (6R)-5,10-methenyltetrahydrofolate + H2O = (6R)-10-formyltetrahydrofolate + H(+). It participates in one-carbon metabolism; tetrahydrofolate interconversion. In terms of biological role, catalyzes the oxidation of 5,10-methylenetetrahydrofolate to 5,10-methenyltetrahydrofolate and then the hydrolysis of 5,10-methenyltetrahydrofolate to 10-formyltetrahydrofolate. In Nitrosomonas europaea (strain ATCC 19718 / CIP 103999 / KCTC 2705 / NBRC 14298), this protein is Bifunctional protein FolD.